The chain runs to 115 residues: U3-lycotoxin-Ls1a (115 aa).

A signal peptide spans 1 to 20; the sequence is MKFVLLFGVLLVTLFSYSSA. Residues 21-44 constitute a propeptide that is removed on maturation; it reads EMLDDFDQAVEDELLSLIEKEEAR. Intrachain disulfides connect C48–C63, C55–C72, C62–C87, and C74–C85.

It belongs to the neurotoxin 19 (CSTX) family. 01 subfamily. As to expression, expressed by the venom gland.

It localises to the secreted. The chain is U3-lycotoxin-Ls1a from Lycosa singoriensis (Wolf spider).